Here is a 224-residue protein sequence, read N- to C-terminus: Ribosomal RNA large subunit methyltransferase E (224 aa).

G60, W62, D93, D109, and D137 together coordinate S-adenosyl-L-methionine. Residue K177 is the Proton acceptor of the active site.

It belongs to the class I-like SAM-binding methyltransferase superfamily. RNA methyltransferase RlmE family.

The protein resides in the cytoplasm. The catalysed reaction is uridine(2552) in 23S rRNA + S-adenosyl-L-methionine = 2'-O-methyluridine(2552) in 23S rRNA + S-adenosyl-L-homocysteine + H(+). Specifically methylates the uridine in position 2552 of 23S rRNA at the 2'-O position of the ribose in the fully assembled 50S ribosomal subunit. The polypeptide is Ribosomal RNA large subunit methyltransferase E (Polynucleobacter asymbioticus (strain DSM 18221 / CIP 109841 / QLW-P1DMWA-1) (Polynucleobacter necessarius subsp. asymbioticus)).